Here is a 137-residue protein sequence, read N- to C-terminus: Thionin BTH7 (137 aa).

An N-terminal signal peptide occupies residues 1 to 28 (MATNKSIKSVVICVLILGLVLEQVQVEG). 4 disulfides stabilise this stretch: C31/C68, C32/C60, C40/C58, and C44/C54. Positions 75–137 (LNLLPESGEP…DGEVIQSVEA (63 aa)) are cleaved as a propeptide — acidic domain.

Belongs to the plant thionin (TC 1.C.44) family. 4 C-C subfamily.

It is found in the secreted. Its function is as follows. Thionins are small plant proteins which are toxic to animal cells. They seem to exert their toxic effect at the level of the cell membrane. Their precise function is not known. This Hordeum vulgare (Barley) protein is Thionin BTH7.